Consider the following 343-residue polypeptide: Anthranilate phosphoribosyltransferase (343 aa).

5-phospho-alpha-D-ribose 1-diphosphate is bound by residues Gly84, 87-88, Thr92, 94-97, 112-120, and Ser124; these read GD, NIST, and KHGNRSVSS. Gly84 contacts anthranilate. Ser96 is a binding site for Mg(2+). Position 115 (Asn115) interacts with anthranilate. An anthranilate-binding site is contributed by Arg170. Residues Asp229 and Glu230 each coordinate Mg(2+).

It belongs to the anthranilate phosphoribosyltransferase family. In terms of assembly, homodimer. Requires Mg(2+) as cofactor.

The catalysed reaction is N-(5-phospho-beta-D-ribosyl)anthranilate + diphosphate = 5-phospho-alpha-D-ribose 1-diphosphate + anthranilate. It participates in amino-acid biosynthesis; L-tryptophan biosynthesis; L-tryptophan from chorismate: step 2/5. In terms of biological role, catalyzes the transfer of the phosphoribosyl group of 5-phosphorylribose-1-pyrophosphate (PRPP) to anthranilate to yield N-(5'-phosphoribosyl)-anthranilate (PRA). The protein is Anthranilate phosphoribosyltransferase of Stenotrophomonas maltophilia (strain R551-3).